The sequence spans 160 residues: Small ribosomal subunit protein uS19v (160 aa).

The protein belongs to the universal ribosomal protein uS19 family.

Its subcellular location is the cytoplasm. The protein is Small ribosomal subunit protein uS19v (RPS15F) of Arabidopsis thaliana (Mouse-ear cress).